The following is a 397-amino-acid chain: MKTPFRDRVELFANKDVLKDHYEPEEIRERDEEIDQYANALQDVVDGWEPDNVFVYGKTGVGKTAVTRYMMDALEYEADDRDGVDSVTSVEVNCHHHPSSYQAAIALVNELRGDTDSDPLTTGLSTSDVLNALFDEIEAREGTVLIVLDEIDNLDDDDMLLYQLPRAKTNGNIEDSQVAVVGISNDYTFRNDLSPKVQDTLCEREIKFPPYDANELVTILDDRAERALSSGVLTGGVIPQCAALAARDRGSARQAIDLLRESVNVAIEDERETVTEDDVETAVRRVERGRIKDSIKDLTTHGQYVLLAVTQTAIADDTPVRAKELYEVYADIAAEYASDPLSQRSVHDHLNDLSMLGFLRQHDRNYGRGGGQFFEYELDVDATMVQEAIADADDATV.

ATP-binding positions include 61-65 (VGKTA), Tyr211, and Arg223.

This sequence belongs to the CDC6/cdc18 family.

Its function is as follows. Involved in regulation of DNA replication. This Halobacterium salinarum (strain ATCC 700922 / JCM 11081 / NRC-1) (Halobacterium halobium) protein is ORC1-type DNA replication protein 8 (orc8).